The sequence spans 133 residues: Ribosome-binding factor A (133 aa).

Belongs to the RbfA family. Monomer. Binds 30S ribosomal subunits, but not 50S ribosomal subunits or 70S ribosomes.

Its subcellular location is the cytoplasm. In terms of biological role, one of several proteins that assist in the late maturation steps of the functional core of the 30S ribosomal subunit. Associates with free 30S ribosomal subunits (but not with 30S subunits that are part of 70S ribosomes or polysomes). Required for efficient processing of 16S rRNA. May interact with the 5'-terminal helix region of 16S rRNA. This Bordetella bronchiseptica (strain ATCC BAA-588 / NCTC 13252 / RB50) (Alcaligenes bronchisepticus) protein is Ribosome-binding factor A.